We begin with the raw amino-acid sequence, 901 residues long: HTH-type transcriptional regulator MalT (901 aa).

An ATP-binding site is contributed by 39–46; sequence SPAGYGKT. Residues 829–894 form the HTH luxR-type domain; sequence ELIRTSPLTQ…DAVQHAQQLL (66 aa). The H-T-H motif DNA-binding region spans 853–872; sequence NEQIAGELEVAATTIKTHIR.

The protein belongs to the MalT family. As to quaternary structure, monomer in solution. Oligomerizes to an active state in the presence of the positive effectors ATP and maltotriose.

Its activity is regulated as follows. Activated by ATP and maltotriose, which are both required for DNA binding. Positively regulates the transcription of the maltose regulon whose gene products are responsible for uptake and catabolism of malto-oligosaccharides. Specifically binds to the promoter region of its target genes, recognizing a short DNA motif called the MalT box. The sequence is that of HTH-type transcriptional regulator MalT from Escherichia coli (strain K12 / MC4100 / BW2952).